Reading from the N-terminus, the 265-residue chain is 5'-nucleotidase SurE (265 aa).

Asp-12, Asp-13, Ser-43, and Asn-91 together coordinate a divalent metal cation.

Belongs to the SurE nucleotidase family. A divalent metal cation is required as a cofactor.

It is found in the cytoplasm. The enzyme catalyses a ribonucleoside 5'-phosphate + H2O = a ribonucleoside + phosphate. Its function is as follows. Nucleotidase that shows phosphatase activity on nucleoside 5'-monophosphates. The protein is 5'-nucleotidase SurE of Haloquadratum walsbyi (strain DSM 16790 / HBSQ001).